We begin with the raw amino-acid sequence, 433 residues long: Oxaloacetate decarboxylase beta chain 2 (433 aa).

9 helical membrane-spanning segments follow: residues 13–35, 42–64, 125–147, 160–182, 214–236, 266–288, 308–327, 339–361, and 413–432; these read LMHL…WLAI, LLLL…LALT, LFYK…VGAM, LLLG…TLNY, LAPE…VPLI, ILFP…PLLG, TVQN…SVGA, TLGI…VLMA, and VAGV…YVLA.

It belongs to the GcdB/MmdB/OadB family. In terms of assembly, heterotrimer of an alpha, a beta and a gamma subunit. Requires Na(+) as cofactor.

It is found in the cell membrane. It catalyses the reaction oxaloacetate + 2 Na(+)(in) + H(+) = pyruvate + 2 Na(+)(out) + CO2. Its function is as follows. Catalyzes the decarboxylation of oxaloacetate coupled to Na(+) translocation. The chain is Oxaloacetate decarboxylase beta chain 2 (oadB2) from Salmonella typhimurium (strain LT2 / SGSC1412 / ATCC 700720).